The primary structure comprises 332 residues: Ribosomal RNA small subunit methyltransferase H (332 aa).

Residues 42 to 44 (GGH), Asp-62, Phe-86, Asp-105, and Gln-112 contribute to the S-adenosyl-L-methionine site.

The protein belongs to the methyltransferase superfamily. RsmH family.

It is found in the cytoplasm. It carries out the reaction cytidine(1402) in 16S rRNA + S-adenosyl-L-methionine = N(4)-methylcytidine(1402) in 16S rRNA + S-adenosyl-L-homocysteine + H(+). Functionally, specifically methylates the N4 position of cytidine in position 1402 (C1402) of 16S rRNA. The polypeptide is Ribosomal RNA small subunit methyltransferase H (Cupriavidus pinatubonensis (strain JMP 134 / LMG 1197) (Cupriavidus necator (strain JMP 134))).